The following is a 160-amino-acid chain: Phosphopantetheine adenylyltransferase (160 aa).

Residue Thr-9 participates in substrate binding. ATP-binding positions include 9–10 (TF) and His-17. Residues Lys-41, Leu-73, and Arg-87 each coordinate substrate. ATP is bound by residues 88–90 (GLR), Glu-98, and 123–129 (YSFLSSS).

The protein belongs to the bacterial CoaD family. In terms of assembly, homohexamer. Requires Mg(2+) as cofactor.

It is found in the cytoplasm. The catalysed reaction is (R)-4'-phosphopantetheine + ATP + H(+) = 3'-dephospho-CoA + diphosphate. It participates in cofactor biosynthesis; coenzyme A biosynthesis; CoA from (R)-pantothenate: step 4/5. Reversibly transfers an adenylyl group from ATP to 4'-phosphopantetheine, yielding dephospho-CoA (dPCoA) and pyrophosphate. This is Phosphopantetheine adenylyltransferase from Moorella thermoacetica (strain ATCC 39073 / JCM 9320).